Consider the following 130-residue polypeptide: Large ribosomal subunit protein uL14 (130 aa).

This sequence belongs to the universal ribosomal protein uL14 family. In terms of assembly, part of the 50S ribosomal subunit. Forms a cluster with proteins L3 and L19. In the 70S ribosome, L14 and L19 interact and together make contacts with the 16S rRNA in bridges B5 and B8.

Binds to 23S rRNA. Forms part of two intersubunit bridges in the 70S ribosome. This chain is Large ribosomal subunit protein uL14, found in Leptospira interrogans serogroup Icterohaemorrhagiae serovar copenhageni (strain Fiocruz L1-130).